A 498-amino-acid chain; its full sequence is UDP-N-acetylmuramate--L-alanine ligase (498 aa).

Glycine 122–serine 128 is a binding site for ATP.

This sequence belongs to the MurCDEF family.

It localises to the cytoplasm. The catalysed reaction is UDP-N-acetyl-alpha-D-muramate + L-alanine + ATP = UDP-N-acetyl-alpha-D-muramoyl-L-alanine + ADP + phosphate + H(+). It participates in cell wall biogenesis; peptidoglycan biosynthesis. Functionally, cell wall formation. The chain is UDP-N-acetylmuramate--L-alanine ligase from Corynebacterium jeikeium (strain K411).